The primary structure comprises 151 residues: Large ribosomal subunit protein bL9 (151 aa).

It belongs to the bacterial ribosomal protein bL9 family.

Its function is as follows. Binds to the 23S rRNA. The polypeptide is Large ribosomal subunit protein bL9 (Pseudothermotoga lettingae (strain ATCC BAA-301 / DSM 14385 / NBRC 107922 / TMO) (Thermotoga lettingae)).